The following is a 278-amino-acid chain: Sulfide dehydrogenase subunit beta (278 aa).

Residues 1–4 (MFKI) constitute a propeptide that is removed on maturation. Residues 1-95 (MFKILRKERL…LGPLGKPSHI (95 aa)) form the FAD-binding FR-type domain. [2Fe-2S] cluster is bound by residues cysteine 222, cysteine 225, and cysteine 237.

As to quaternary structure, heterodimer of alpha and beta subunits. It depends on FAD as a cofactor. [2Fe-2S] cluster is required as a cofactor.

Its subcellular location is the cytoplasm. It carries out the reaction n sulfur + hydrogen sulfide + NADP(+) = (n+1) sulfur + NADPH. It catalyses the reaction 2 reduced [2Fe-2S]-[ferredoxin] + NADP(+) + H(+) = 2 oxidized [2Fe-2S]-[ferredoxin] + NADPH. In terms of biological role, a bifunctional enzyme that catalyzes the reduction of elemental sulfur or polysulfide to hydrogen sulfide with NADPH as electron donor. Also functions as a reduced ferredoxin:NADP oxidoreductase with a very high affinity for reduced ferredoxin. Exhibits a broad specificity for various physiological and non-physiological substrates with varied reduction potentials such as methyl viologen, benzyl viologen, FAD, FMN, methylene blue, 2,6-dichlorophenolindophenol (DCIP), cytochrome C and ferricyanide with highest preference for benzyl viologen. Does not reduce fumarate, succinate, nitrate, nitrite, sulfate, sulfite or protons. Does not possess any hydrogenase activity or NADPH-dependent glutamate synthase activity. This Pyrococcus furiosus (strain ATCC 43587 / DSM 3638 / JCM 8422 / Vc1) protein is Sulfide dehydrogenase subunit beta.